A 283-amino-acid chain; its full sequence is Thymidylate synthase (283 aa).

Arginine 22 contacts dUMP. The Nucleophile role is filled by cysteine 160. DUMP-binding positions include 180–183 (RSCD), asparagine 191, and 221–223 (HIY). Residue aspartate 183 participates in (6R)-5,10-methylene-5,6,7,8-tetrahydrofolate binding. Residue serine 282 coordinates (6R)-5,10-methylene-5,6,7,8-tetrahydrofolate.

It belongs to the thymidylate synthase family. Bacterial-type ThyA subfamily. As to quaternary structure, homodimer.

It is found in the cytoplasm. The enzyme catalyses dUMP + (6R)-5,10-methylene-5,6,7,8-tetrahydrofolate = 7,8-dihydrofolate + dTMP. It functions in the pathway pyrimidine metabolism; dTTP biosynthesis. In terms of biological role, catalyzes the reductive methylation of 2'-deoxyuridine-5'-monophosphate (dUMP) to 2'-deoxythymidine-5'-monophosphate (dTMP) while utilizing 5,10-methylenetetrahydrofolate (mTHF) as the methyl donor and reductant in the reaction, yielding dihydrofolate (DHF) as a by-product. This enzymatic reaction provides an intracellular de novo source of dTMP, an essential precursor for DNA biosynthesis. In Shewanella halifaxensis (strain HAW-EB4), this protein is Thymidylate synthase.